We begin with the raw amino-acid sequence, 427 residues long: Acyltransferase fer5 (427 aa).

Residues Met-1–Pro-24 form a disordered region. Residue His-342 coordinates substrate. Residue Glu-380 is the Proton acceptor of the active site.

Belongs to the lysine N-acyltransferase mbtK family.

Its pathway is siderophore biosynthesis. Its function is as follows. Acyltransferase; part of the gene cluster that mediates the biosynthesis of siderophore ferrichrome A which is contributing to organismal virulence. The first step of ferrichrome A biosynthesis is performed by the HMG-CoA synthase hcs1 which catalyzes the generation of HMG-CoA and CoA using acetoacetyl-CoA and acetyl-CoA as substrates. The enoyl-CoA isomerase/hydratase fer4 then catalyzes the conversion of hcs1-produced HMG-CoA to methylglutaconyl-CoA. The acyltransferase fer5 then fuses the fer4-generated methylglutaconyl-CoA with sid1-generated hydroxyornithine to yield methylglutaconyl hydroxyornithine. Methylglutaconyl hydroxyornithine is then available for use by the NRPS fer3 to generate ferrichrome A. This Mycosarcoma maydis (Corn smut fungus) protein is Acyltransferase fer5.